A 456-amino-acid chain; its full sequence is RuvB-like helicase 1 (456 aa).

71–78 contributes to the ATP binding site; sequence GGAGTGKT.

The protein belongs to the RuvB family. In terms of assembly, may form heterododecamers with RVB2. Component of the SWR1 chromatin remodeling complex, the INO80 chromatin remodeling complex, and of the R2TP complex.

The protein localises to the nucleus. It catalyses the reaction ATP + H2O = ADP + phosphate + H(+). Its function is as follows. DNA helicase which participates in several chromatin remodeling complexes, including the SWR1 and the INO80 complexes. The SWR1 complex mediates the ATP-dependent exchange of histone H2A for the H2A variant HZT1 leading to transcriptional regulation of selected genes by chromatin remodeling. The INO80 complex remodels chromatin by shifting nucleosomes and is involved in DNA repair. Also involved in pre-rRNA processing. The polypeptide is RuvB-like helicase 1 (rvb1) (Schizosaccharomyces pombe (strain 972 / ATCC 24843) (Fission yeast)).